A 206-amino-acid polypeptide reads, in one-letter code: MGERLGIFGGTFNPVHRGHLAMARAARDRCGLDQILWVPAAQPPHKPLAGGASIGDRVEMVRLAIAGEAGMALSLVDARRPGPSYAIDTLRLLEEQYPQAQWHWLLGQDGLADLPGWYRAAELIPRCRWIVVPRPGSGADPKQAMADLTERFGAVFVPLSDFECDISSTRVREQLAAGRAGWEALLPEQVVSYIHKRGLYDVPAGA.

The protein belongs to the NadD family.

The enzyme catalyses nicotinate beta-D-ribonucleotide + ATP + H(+) = deamido-NAD(+) + diphosphate. The protein operates within cofactor biosynthesis; NAD(+) biosynthesis; deamido-NAD(+) from nicotinate D-ribonucleotide: step 1/1. Its function is as follows. Catalyzes the reversible adenylation of nicotinate mononucleotide (NaMN) to nicotinic acid adenine dinucleotide (NaAD). The polypeptide is Probable nicotinate-nucleotide adenylyltransferase (Gloeobacter violaceus (strain ATCC 29082 / PCC 7421)).